The chain runs to 1154 residues: Nitric oxide synthase, inducible (1154 aa).

Residues 22-58 (KDINNNVEKPPGATPSPSTQDDLKNHKHHNDSPQPLT) form a disordered region. A DINNN-motif; mediates interaction with SPSB1, SPSB2 and SPSB4 motif is present at residues 23–27 (DINNN). Zn(2+) is bound by residues C107 and C112. C197 contacts heme b. L-arginine is bound by residues Q260, W369, Y370, and E374. Positions 378, 459, 460, and 473 each coordinate (6R)-L-erythro-5,6,7,8-tetrahydrobiopterin. A heme b-binding site is contributed by Y488. Residues 512-532 (LKVLVKAVLFASMLMRKTMAS) are calmodulin-binding. The Flavodoxin-like domain maps to 536 to 674 (VTILFATETG…AFRCWAVQTF (139 aa)). The FMN site is built by T542, E543, T544, K546, and S547. A Phosphotyrosine modification is found at Y572. FMN contacts are provided by S588, T589, S625, C632, and E658. One can recognise an FAD-binding FR-type domain in the interval 727–967 (KNVFTLRLKS…VRSAGNFKLP (241 aa)). Position 747 (R747) interacts with NADP(+). Residues H769, R903, Y905, S906, T921, A923, Y927, V940, C941, and S942 each contribute to the FAD site. Positions 981, 1014, 1043, 1044, 1050, 1052, 1054, and 1087 each coordinate NADP(+).

It belongs to the NOS family. In terms of assembly, homodimer. Interacts with NHERF1. Interacts with GAPDH; induced by oxidatively-modified low-densitity lipoprotein (LDL(ox)). Interacts with S100A8 and S100A9 to form the iNOS-S100A8/9 transnitrosylase complex. Interacts with SPSB1, SPSB2 and SPSB4. Interacts with ELOC and CUL5 in the presence of SPSB1 or SPSB2 or SPSB4. Forms a complex with ASL, ASS1 and HSP90AA1; the complex regulates cell-autonomous L-arginine synthesis and citrulline recycling while channeling extracellular L-arginine to nitric oxide synthesis pathway. Requires heme b as cofactor. It depends on FAD as a cofactor. The cofactor is FMN. (6R)-L-erythro-5,6,7,8-tetrahydrobiopterin serves as cofactor. In terms of processing, polyubiquitinated; mediated by SPSB1, SPSB2 and SPSB4, leading to proteasomal degradation.

The protein localises to the cytoplasm. It is found in the cytosol. It carries out the reaction 2 L-arginine + 3 NADPH + 4 O2 + H(+) = 2 L-citrulline + 2 nitric oxide + 3 NADP(+) + 4 H2O. Its activity is regulated as follows. Regulated by calcium/calmodulin. In terms of biological role, produces nitric oxide (NO) which is a messenger molecule with diverse functions throughout the body. In macrophages, NO mediates tumoricidal and bactericidal actions. Also has nitrosylase activity and mediates cysteine S-nitrosylation of cytoplasmic target proteins such PTGS2/COX2. As component of the iNOS-S100A8/9 transnitrosylase complex involved in the selective inflammatory stimulus-dependent S-nitrosylation of GAPDH implicated in regulation of the GAIT complex activity and probably multiple targets including ANXA5, EZR, MSN and VIM. Involved in inflammation, enhances the synthesis of pro-inflammatory mediators such as IL6 and IL8. This chain is Nitric oxide synthase, inducible (NOS2), found in Canis lupus familiaris (Dog).